The sequence spans 149 residues: MKIEIIETKIGLVKIIYDDTQTKIISVMFIDSSKIKPVKNSLSGLHKYFKGQNDYFTNLDLELKGTPFQRKVWKQILEIPFGETRTYSDIAMAIGNPKAVRAVANACGANPIAIIVPCHRVVGKNNDGGYEYGLEKKLWLLDFEKKNTQ.

The Alkyl group acceptor role is filled by Cys118.

Belongs to the MGMT family.

It carries out the reaction a 6-O-methyl-2'-deoxyguanosine in DNA + L-cysteinyl-[protein] = S-methyl-L-cysteinyl-[protein] + a 2'-deoxyguanosine in DNA. The enzyme catalyses a 4-O-methyl-thymidine in DNA + L-cysteinyl-[protein] = a thymidine in DNA + S-methyl-L-cysteinyl-[protein]. This Acanthamoeba polyphaga (Amoeba) protein is Probable methylated-DNA--protein-cysteine methyltransferase (MGMT).